Consider the following 351-residue polypeptide: Biotin synthase (351 aa).

The region spanning asparagine 48–aspartate 265 is the Radical SAM core domain. [4Fe-4S] cluster is bound by residues cysteine 63, cysteine 67, and cysteine 70. Residues cysteine 107, cysteine 139, cysteine 199, and arginine 269 each contribute to the [2Fe-2S] cluster site.

This sequence belongs to the radical SAM superfamily. Biotin synthase family. Homodimer. [4Fe-4S] cluster is required as a cofactor. [2Fe-2S] cluster serves as cofactor.

It carries out the reaction (4R,5S)-dethiobiotin + (sulfur carrier)-SH + 2 reduced [2Fe-2S]-[ferredoxin] + 2 S-adenosyl-L-methionine = (sulfur carrier)-H + biotin + 2 5'-deoxyadenosine + 2 L-methionine + 2 oxidized [2Fe-2S]-[ferredoxin]. The protein operates within cofactor biosynthesis; biotin biosynthesis; biotin from 7,8-diaminononanoate: step 2/2. Its function is as follows. Catalyzes the conversion of dethiobiotin (DTB) to biotin by the insertion of a sulfur atom into dethiobiotin via a radical-based mechanism. The polypeptide is Biotin synthase (Leptospira interrogans serogroup Icterohaemorrhagiae serovar copenhageni (strain Fiocruz L1-130)).